The chain runs to 179 residues: Large ribosomal subunit protein uL5 (179 aa).

Belongs to the universal ribosomal protein uL5 family. In terms of assembly, part of the 50S ribosomal subunit; part of the 5S rRNA/L5/L18/L25 subcomplex. Contacts the 5S rRNA and the P site tRNA. Forms a bridge to the 30S subunit in the 70S ribosome.

In terms of biological role, this is one of the proteins that bind and probably mediate the attachment of the 5S RNA into the large ribosomal subunit, where it forms part of the central protuberance. In the 70S ribosome it contacts protein S13 of the 30S subunit (bridge B1b), connecting the 2 subunits; this bridge is implicated in subunit movement. Contacts the P site tRNA; the 5S rRNA and some of its associated proteins might help stabilize positioning of ribosome-bound tRNAs. This Prochlorococcus marinus (strain NATL1A) protein is Large ribosomal subunit protein uL5.